Reading from the N-terminus, the 362-residue chain is MYQLNQNQTVNTPQKYRPRLALTVGDPGGIGAEVILKALADLEIGHNYDLTVVSNKNLLQETYKQLSSMENLLPLADPNLLKIIDVTVDRETARQINLGTGNAASGAASFAYMDYAIAQTLAGNFDGIVTGPIAKSAWKAAGYNYPGQTELLAQKSGVERFGMLFVARSPYTGWTLRALLATTHIPLRQVADTLTPQLLTQKLDLLVECLEKDFGITSGRIAIAGLNPHSGEQGQLGTEELDWLIPWLESERQKRPHFQLDGPIPPDTMWVKPGQAWYGNAIVQHPADAYLALYHDQGLIPVKLMAFDRAVNTSIGLPFVRTSPDHGTAFDIAGQGIADATSMKEAISLAAELVCQRLHLEK.

T149 contributes to the substrate binding site. Residues H184, H229, and H295 each coordinate a divalent metal cation. The substrate site is built by K303, N312, and R321.

This sequence belongs to the PdxA family. As to quaternary structure, homodimer. A divalent metal cation serves as cofactor.

It is found in the cytoplasm. It catalyses the reaction 4-(phosphooxy)-L-threonine + NAD(+) = 3-amino-2-oxopropyl phosphate + CO2 + NADH. It functions in the pathway cofactor biosynthesis; pyridoxine 5'-phosphate biosynthesis; pyridoxine 5'-phosphate from D-erythrose 4-phosphate: step 4/5. Functionally, catalyzes the NAD(P)-dependent oxidation of 4-(phosphooxy)-L-threonine (HTP) into 2-amino-3-oxo-4-(phosphooxy)butyric acid which spontaneously decarboxylates to form 3-amino-2-oxopropyl phosphate (AHAP). The protein is 4-hydroxythreonine-4-phosphate dehydrogenase of Nostoc sp. (strain PCC 7120 / SAG 25.82 / UTEX 2576).